The following is an 892-amino-acid chain: Translation initiation factor IF-2 (892 aa).

The segment at 65–296 (KTRSTLNIPS…KGKRKPSTLQ (232 aa)) is disordered. The span at 68–82 (STLNIPSTGGKSKSV) shows a compositional bias: polar residues. Positions 99–217 (EQAKAEEQAQ…KMAAENEGKW (119 aa)) are enriched in basic and acidic residues. The segment covering 224-237 (QTESADYHVTTSQH) has biased composition (polar residues). The span at 239–254 (RAAEDENDAKVEGDRR) shows a compositional bias: basic and acidic residues. Residues 255–269 (SRTRGGKATKQKKGN) are compositionally biased toward basic residues. Basic and acidic residues predominate over residues 270 to 283 (KLSESKADREEARA). A tr-type G domain is found at 391 to 560 (HRAPVVTIMG…LLQAEVLELK (170 aa)). A G1 region spans residues 400–407 (GHVDHGKT). 400–407 (GHVDHGKT) contributes to the GTP binding site. The interval 425–429 (GITQH) is G2. The G3 stretch occupies residues 446–449 (DTPG). GTP contacts are provided by residues 446-450 (DTPGH) and 500-503 (NKID). The G4 stretch occupies residues 500-503 (NKID). The interval 536 to 538 (SAK) is G5.

It belongs to the TRAFAC class translation factor GTPase superfamily. Classic translation factor GTPase family. IF-2 subfamily.

Its subcellular location is the cytoplasm. In terms of biological role, one of the essential components for the initiation of protein synthesis. Protects formylmethionyl-tRNA from spontaneous hydrolysis and promotes its binding to the 30S ribosomal subunits. Also involved in the hydrolysis of GTP during the formation of the 70S ribosomal complex. The protein is Translation initiation factor IF-2 of Yersinia pseudotuberculosis serotype O:1b (strain IP 31758).